Consider the following 132-residue polypeptide: Aspartate 1-decarboxylase (132 aa).

Ser-25 functions as the Schiff-base intermediate with substrate; via pyruvic acid in the catalytic mechanism. Residue Ser-25 is modified to Pyruvic acid (Ser). A substrate-binding site is contributed by Thr-57. The active-site Proton donor is Tyr-58. Substrate is bound at residue 73 to 75; that stretch reads GAA.

This sequence belongs to the PanD family. In terms of assembly, heterooctamer of four alpha and four beta subunits. Pyruvate serves as cofactor. Post-translationally, is synthesized initially as an inactive proenzyme, which is activated by self-cleavage at a specific serine bond to produce a beta-subunit with a hydroxyl group at its C-terminus and an alpha-subunit with a pyruvoyl group at its N-terminus.

Its subcellular location is the cytoplasm. It catalyses the reaction L-aspartate + H(+) = beta-alanine + CO2. It participates in cofactor biosynthesis; (R)-pantothenate biosynthesis; beta-alanine from L-aspartate: step 1/1. Catalyzes the pyruvoyl-dependent decarboxylation of aspartate to produce beta-alanine. This Pelotomaculum thermopropionicum (strain DSM 13744 / JCM 10971 / SI) protein is Aspartate 1-decarboxylase.